We begin with the raw amino-acid sequence, 238 residues long: Dolichyldiphosphatase 1 (238 aa).

Transmembrane regions (helical) follow at residues 33–53 (LAYL…LIIF), 100–120 (PSSH…FLYL), 130–150 (FLDL…AFLV), and 162–182 (WSQV…WFIF).

This sequence belongs to the dolichyldiphosphatase family.

It is found in the endoplasmic reticulum membrane. The catalysed reaction is a di-trans,poly-cis-dolichyl diphosphate + H2O = a di-trans,poly-cis-dolichyl phosphate + phosphate + H(+). It participates in protein modification; protein glycosylation. Functionally, required for efficient N-glycosylation. Necessary for maintaining optimal levels of dolichol-linked oligosaccharides. Hydrolyzes dolichyl pyrophosphate at a very high rate and dolichyl monophosphate at a much lower rate. Does not act on phosphatidate. In Callithrix jacchus (White-tufted-ear marmoset), this protein is Dolichyldiphosphatase 1 (DOLPP1).